Reading from the N-terminus, the 598-residue chain is Inactive metallocarboxypeptidase ECM14 (598 aa).

The first 21 residues, Met1–Ala21, serve as a signal peptide directing secretion. The propeptide occupies Ile22–Pro174. The region spanning Asn202–Leu522 is the Peptidase M14 domain. 2 residues coordinate Zn(2+): His264 and Glu267. Substrate contacts are provided by residues His264–Glu267, Arg322, and Asp339–Arg340. Residues Cys333 and Cys356 are joined by a disulfide bond. N-linked (GlcNAc...) asparagine glycosylation is present at Asn349. Residue His396 participates in Zn(2+) binding. Position 397–398 (Ser397–Tyr398) interacts with substrate. The segment at Gln539–Arg598 is disordered. The segment covering Asn550–Asp562 has biased composition (acidic residues). The span at Gly564 to Asn581 shows a compositional bias: basic and acidic residues.

Belongs to the peptidase M14 family. The cofactor is Zn(2+).

It localises to the vacuole. Its subcellular location is the secreted. Inactive carboxypeptidase that may play a role in cell wall organization and biogenesis. In Ajellomyces capsulatus (strain H143) (Darling's disease fungus), this protein is Inactive metallocarboxypeptidase ECM14 (ECM14).